The following is a 253-amino-acid chain: Ribosomal RNA small subunit methyltransferase A (253 aa).

Residues H12, L14, G39, E60, D81, and N104 each contribute to the S-adenosyl-L-methionine site.

This sequence belongs to the class I-like SAM-binding methyltransferase superfamily. rRNA adenine N(6)-methyltransferase family. RsmA subfamily.

Its subcellular location is the cytoplasm. The catalysed reaction is adenosine(1518)/adenosine(1519) in 16S rRNA + 4 S-adenosyl-L-methionine = N(6)-dimethyladenosine(1518)/N(6)-dimethyladenosine(1519) in 16S rRNA + 4 S-adenosyl-L-homocysteine + 4 H(+). Specifically dimethylates two adjacent adenosines (A1518 and A1519) in the loop of a conserved hairpin near the 3'-end of 16S rRNA in the 30S particle. May play a critical role in biogenesis of 30S subunits. This Acidovorax ebreus (strain TPSY) (Diaphorobacter sp. (strain TPSY)) protein is Ribosomal RNA small subunit methyltransferase A.